The chain runs to 338 residues: tRNA pseudouridine synthase D (338 aa).

Asp79 serves as the catalytic Nucleophile. The region spanning 154-303 (GVPNYFGEQR…EEAWRANILY (150 aa)) is the TRUD domain.

It belongs to the pseudouridine synthase TruD family.

The enzyme catalyses uridine(13) in tRNA = pseudouridine(13) in tRNA. Functionally, responsible for synthesis of pseudouridine from uracil-13 in transfer RNAs. The polypeptide is tRNA pseudouridine synthase D (Legionella pneumophila (strain Corby)).